The following is a 164-amino-acid chain: Peptidyl-prolyl cis-trans isomerase A (164 aa).

Met-1 carries the N-acetylmethionine modification. The residue at position 2 (Val-2) is an N-acetylvaline; in Peptidyl-prolyl cis-trans isomerase A, N-terminally processed. The 157-residue stretch at 7-163 (FFDISADGEP…KKITISDCGQ (157 aa)) folds into the PPIase cyclophilin-type domain. Position 28 is an N6-acetyllysine; alternate (Lys-28). A Glycyl lysine isopeptide (Lys-Gly) (interchain with G-Cter in SUMO2); alternate cross-link involves residue Lys-28. Lys-28 is covalently cross-linked (Glycyl lysine isopeptide (Lys-Gly) (interchain with G-Cter in ubiquitin); alternate). Lys-44 carries the N6-acetyllysine modification. At Ser-77 the chain carries Phosphoserine. Lys-82 is subject to N6-acetyllysine; alternate. Residue Lys-82 forms a Glycyl lysine isopeptide (Lys-Gly) (interchain with G-Cter in SUMO2); alternate linkage. Phosphothreonine is present on Thr-93. The N-linked (GlcNAc...) asparagine glycan is linked to Asn-108. 3 positions are modified to N6-acetyllysine: Lys-125, Lys-131, and Lys-133.

The protein belongs to the cyclophilin-type PPIase family. PPIase A subfamily. As to quaternary structure, interacts with protein phosphatase PPP3CA/calcineurin A. Interacts with PRPF19 isoform 2 (via N-terminus). Interacts with isoform 2 of BSG/CD147. Interacts with FOXO1; the interaction promotes FOXO1 dephosphorylation, nuclear accumulation and transcriptional activity. Interacts with integrin ITGA2B:ITGB3; the interaction is ROS and peptidyl-prolyl cis-trans isomerase (PPIase) activity-dependent and is increased in the presence of thrombin. Interacts with MAP3K5. Interacts with TARDBP; the interaction is dependent on the RNA-binding activity of TARDBP and the PPIase activity of PPIA/CYPA and the acetylation of PPIA/CYPA at Lys-125 favors the interaction. Interacts with HNRNPA1, HNRNPA2B1, HNRNPC, RBMX, HNRNPK and HNRNPM. In terms of processing, acetylation at Lys-125 markedly inhibits catalysis of cis to trans isomerization. PPIA acetylation also antagonizes the immunosuppressive effects of cyclosporine by inhibiting the sequential steps of cyclosporine binding and calcineurin inhibition. Acetylation at Lys-125 favors the interaction with TARDBP.

Its subcellular location is the cytoplasm. It localises to the secreted. The protein resides in the nucleus. The catalysed reaction is [protein]-peptidylproline (omega=180) = [protein]-peptidylproline (omega=0). With respect to regulation, binds cyclosporin A (CsA). CsA mediates some of its effects via an inhibitory action on PPIase. Catalyzes the cis-trans isomerization of proline imidic peptide bonds in oligopeptides. Exerts a strong chemotactic effect on leukocytes partly through activation of one of its membrane receptors BSG/CD147, initiating a signaling cascade that culminates in MAPK/ERK activation. Activates endothelial cells (ECs) in a proinflammatory manner by stimulating activation of NF-kappa-B and ERK, JNK and p38 MAP-kinases and by inducing expression of adhesion molecules including SELE and VCAM1. Induces apoptosis in ECs by promoting the FOXO1-dependent expression of CCL2 and BCL2L11 which are involved in EC chemotaxis and apoptosis. In response to oxidative stress, initiates proapoptotic and antiapoptotic signaling in ECs via activation of NF-kappa-B and AKT1 and up-regulation of antiapoptotic protein BCL2. Negatively regulates MAP3K5/ASK1 kinase activity, autophosphorylation and oxidative stress-induced apoptosis mediated by MAP3K5/ASK1. Necessary for the assembly of TARDBP in heterogeneous nuclear ribonucleoprotein (hnRNP) complexes and regulates TARDBP binding to RNA UG repeats and TARDBP-dependent expression of HDAC6, ATG7 and VCP which are involved in clearance of protein aggregates. Plays an important role in platelet activation and aggregation. Regulates calcium mobilization and integrin ITGA2B:ITGB3 bidirectional signaling via increased ROS production as well as by facilitating the interaction between integrin and the cell cytoskeleton. Binds heparan sulfate glycosaminoglycans. The sequence is that of Peptidyl-prolyl cis-trans isomerase A (PPIA) from Cricetulus griseus (Chinese hamster).